Here is a 707-residue protein sequence, read N- to C-terminus: Lipase maturation factor 2 (707 aa).

10 consecutive transmembrane segments (helical) span residues Leu10 to Ile30, Leu78 to Leu98, Val102 to Leu122, Tyr123 to Leu143, Asp165 to Val185, Leu227 to Ile247, Val259 to Leu279, Ala310 to Gly330, Leu364 to Leu384, and Ala399 to Val419. 2 N-linked (GlcNAc...) asparagine glycosylation sites follow: Asn489 and Asn616. Residues Ala637–Ala657 traverse the membrane as a helical segment. The interval Pro665 to Lys707 is disordered. Over residues Gln679–Ala691 the composition is skewed to polar residues.

It belongs to the lipase maturation factor family.

It localises to the endoplasmic reticulum membrane. Functionally, involved in the maturation of specific proteins in the endoplasmic reticulum. May be required for maturation and transport of active lipoprotein lipase (LPL) through the secretory pathway. In Homo sapiens (Human), this protein is Lipase maturation factor 2 (LMF2).